We begin with the raw amino-acid sequence, 305 residues long: Tyrosine recombinase XerC (305 aa).

The Core-binding (CB) domain maps to 4–95 (TSIQELIDKW…AVKNFYRFLE (92 aa)). The region spanning 116–298 (LLPKALSEDD…SIKHLEAVYT (183 aa)) is the Tyr recombinase domain. Residues R159, K182, H250, R253, and H276 contribute to the active site. Y285 acts as the O-(3'-phospho-DNA)-tyrosine intermediate in catalysis.

This sequence belongs to the 'phage' integrase family. XerC subfamily. Forms a cyclic heterotetrameric complex composed of two molecules of XerC and two molecules of XerD.

It is found in the cytoplasm. Functionally, site-specific tyrosine recombinase, which acts by catalyzing the cutting and rejoining of the recombining DNA molecules. The XerC-XerD complex is essential to convert dimers of the bacterial chromosome into monomers to permit their segregation at cell division. It also contributes to the segregational stability of plasmids. This Rickettsia felis (strain ATCC VR-1525 / URRWXCal2) (Rickettsia azadi) protein is Tyrosine recombinase XerC.